The sequence spans 179 residues: Dual-action ribosomal maturation protein DarP (179 aa).

This sequence belongs to the DarP family.

Its subcellular location is the cytoplasm. In terms of biological role, member of a network of 50S ribosomal subunit biogenesis factors which assembles along the 30S-50S interface, preventing incorrect 23S rRNA structures from forming. Promotes peptidyl transferase center (PTC) maturation. This Aliivibrio fischeri (strain ATCC 700601 / ES114) (Vibrio fischeri) protein is Dual-action ribosomal maturation protein DarP.